The sequence spans 1023 residues: Phosphoenolpyruvate carboxylase (1023 aa).

Residues H199 and K669 contribute to the active site.

This sequence belongs to the PEPCase type 1 family. Mg(2+) serves as cofactor.

It carries out the reaction oxaloacetate + phosphate = phosphoenolpyruvate + hydrogencarbonate. Functionally, forms oxaloacetate, a four-carbon dicarboxylic acid source for the tricarboxylic acid cycle. This is Phosphoenolpyruvate carboxylase from Trichormus variabilis (strain ATCC 29413 / PCC 7937) (Anabaena variabilis).